The primary structure comprises 49 residues: Large ribosomal subunit protein bL33 (49 aa).

It belongs to the bacterial ribosomal protein bL33 family.

This is Large ribosomal subunit protein bL33 from Lactobacillus acidophilus (strain ATCC 700396 / NCK56 / N2 / NCFM).